The primary structure comprises 216 residues: Cytidylate kinase (216 aa).

Residue 7–15 participates in ATP binding; the sequence is GPSGTGKST.

The protein belongs to the cytidylate kinase family. Type 1 subfamily.

It is found in the cytoplasm. The catalysed reaction is CMP + ATP = CDP + ADP. The enzyme catalyses dCMP + ATP = dCDP + ADP. The sequence is that of Cytidylate kinase from Chlamydia trachomatis serovar D (strain ATCC VR-885 / DSM 19411 / UW-3/Cx).